The chain runs to 261 residues: Cytochrome c oxidase subunit 3 (261 aa).

Residues 1–15 (MAHQSHAYHMVKPSP) are Mitochondrial matrix-facing. A helical membrane pass occupies residues 16–34 (WPLTGALSALLTTSGLTMW). Residues 35 to 40 (FHFHST) lie on the Mitochondrial intermembrane side of the membrane. A helical transmembrane segment spans residues 41-66 (TLLLTGLLTNALTMYQWWRDVVREST). Residues 67-72 (YQGHHT) lie on the Mitochondrial matrix side of the membrane. A helical transmembrane segment spans residues 73-105 (LPVQKGLRYGMILFITSEVFFFAGFFWAFYHSS). The Mitochondrial intermembrane segment spans residues 106 to 128 (LAPTPQLGGHWPPTGIIPLNPLE). The chain crosses the membrane as a helical span at residues 129 to 152 (VPLLNTSVLLASGVSITWAHHSLM). Residues 153–155 (ENN) are Mitochondrial matrix-facing. A helical membrane pass occupies residues 156–183 (RTQMIQALLITILLGIYFTLLQASEYIE). Topologically, residues 184–190 (APFTISD) are mitochondrial intermembrane. Residues 191-223 (GIYGSTFFMATGFHGLHVIIGSTFLTVCLARQL) traverse the membrane as a helical segment. At 224–232 (LFHFTSKHH) the chain is on the mitochondrial matrix side. Residues 233–256 (FGFEAAAWYWHFVDVVWLFLYVSI) form a helical membrane-spanning segment. Residues 257-261 (YWWGS) lie on the Mitochondrial intermembrane side of the membrane.

It belongs to the cytochrome c oxidase subunit 3 family. As to quaternary structure, component of the cytochrome c oxidase (complex IV, CIV), a multisubunit enzyme composed of 14 subunits. The complex is composed of a catalytic core of 3 subunits MT-CO1, MT-CO2 and MT-CO3, encoded in the mitochondrial DNA, and 11 supernumerary subunits COX4I, COX5A, COX5B, COX6A, COX6B, COX6C, COX7A, COX7B, COX7C, COX8 and NDUFA4, which are encoded in the nuclear genome. The complex exists as a monomer or a dimer and forms supercomplexes (SCs) in the inner mitochondrial membrane with NADH-ubiquinone oxidoreductase (complex I, CI) and ubiquinol-cytochrome c oxidoreductase (cytochrome b-c1 complex, complex III, CIII), resulting in different assemblies (supercomplex SCI(1)III(2)IV(1) and megacomplex MCI(2)III(2)IV(2)).

It is found in the mitochondrion inner membrane. The catalysed reaction is 4 Fe(II)-[cytochrome c] + O2 + 8 H(+)(in) = 4 Fe(III)-[cytochrome c] + 2 H2O + 4 H(+)(out). In terms of biological role, component of the cytochrome c oxidase, the last enzyme in the mitochondrial electron transport chain which drives oxidative phosphorylation. The respiratory chain contains 3 multisubunit complexes succinate dehydrogenase (complex II, CII), ubiquinol-cytochrome c oxidoreductase (cytochrome b-c1 complex, complex III, CIII) and cytochrome c oxidase (complex IV, CIV), that cooperate to transfer electrons derived from NADH and succinate to molecular oxygen, creating an electrochemical gradient over the inner membrane that drives transmembrane transport and the ATP synthase. Cytochrome c oxidase is the component of the respiratory chain that catalyzes the reduction of oxygen to water. Electrons originating from reduced cytochrome c in the intermembrane space (IMS) are transferred via the dinuclear copper A center (CU(A)) of subunit 2 and heme A of subunit 1 to the active site in subunit 1, a binuclear center (BNC) formed by heme A3 and copper B (CU(B)). The BNC reduces molecular oxygen to 2 water molecules using 4 electrons from cytochrome c in the IMS and 4 protons from the mitochondrial matrix. The sequence is that of Cytochrome c oxidase subunit 3 (MT-CO3) from Pongo abelii (Sumatran orangutan).